The primary structure comprises 829 residues: Exocyst complex component SEC10b (829 aa).

The stretch at 244–266 (RGLEVAVANLQDYCNELENRLLS) forms a coiled coil.

The protein belongs to the SEC10 family. The exocyst complex is composed of SEC3, SEC5, SEC6, SEC8, SEC10, EXO70A1 and EXO84B. Interacts with EXO84B. Binds to EXO70E2. In terms of tissue distribution, expressed in seedlings, roots, leaves and flowers.

It is found in the cytoplasm. Its subcellular location is the cytosol. The protein resides in the secreted. It localises to the extracellular exosome. Component of the exocyst complex involved in the docking of exocytic vesicles with fusion sites on the plasma membrane during regulated or polarized secretion. Involved in polarized cell growth and organ morphogenesis. During cytokinesis, involved in cell plate initiation, cell plate maturation and formation of new primary cell wall. The polypeptide is Exocyst complex component SEC10b (Arabidopsis thaliana (Mouse-ear cress)).